A 217-amino-acid chain; its full sequence is Probable transaldolase (217 aa).

Catalysis depends on K83, which acts as the Schiff-base intermediate with substrate.

The protein belongs to the transaldolase family. Type 3B subfamily.

It localises to the cytoplasm. The catalysed reaction is D-sedoheptulose 7-phosphate + D-glyceraldehyde 3-phosphate = D-erythrose 4-phosphate + beta-D-fructose 6-phosphate. It functions in the pathway carbohydrate degradation; pentose phosphate pathway; D-glyceraldehyde 3-phosphate and beta-D-fructose 6-phosphate from D-ribose 5-phosphate and D-xylulose 5-phosphate (non-oxidative stage): step 2/3. Functionally, transaldolase is important for the balance of metabolites in the pentose-phosphate pathway. The protein is Probable transaldolase of Dinoroseobacter shibae (strain DSM 16493 / NCIMB 14021 / DFL 12).